Here is a 337-residue protein sequence, read N- to C-terminus: Phenylalanine--tRNA ligase alpha subunit (337 aa).

A Mg(2+)-binding site is contributed by Glu-258.

This sequence belongs to the class-II aminoacyl-tRNA synthetase family. Phe-tRNA synthetase alpha subunit type 1 subfamily. Tetramer of two alpha and two beta subunits. The cofactor is Mg(2+).

The protein localises to the cytoplasm. The catalysed reaction is tRNA(Phe) + L-phenylalanine + ATP = L-phenylalanyl-tRNA(Phe) + AMP + diphosphate + H(+). This is Phenylalanine--tRNA ligase alpha subunit from Burkholderia thailandensis (strain ATCC 700388 / DSM 13276 / CCUG 48851 / CIP 106301 / E264).